The following is a 496-amino-acid chain: 7,8-epoxymelianol synthase CYP88A154 (496 aa).

A helical membrane pass occupies residues 11–31 (FNFLWLILAIFVGTYVVLFGF). Cys-444 contributes to the heme binding site.

Belongs to the cytochrome P450 family. Requires heme as cofactor.

It localises to the membrane. It catalyses the reaction melianol + reduced [NADPH--hemoprotein reductase] + O2 = 7,8-epoxymelianol + oxidized [NADPH--hemoprotein reductase] + H2O + H(+). Its pathway is secondary metabolite biosynthesis; terpenoid biosynthesis. Functionally, monooxygenase involved in the biosynthesis of glabretanes, limonoids and quassinoids triterpene natural products such as ailanthone, chaparrinone, glaucarubinone and amarolide, allelopathic degraded triterpene lactones inhibiting the growth of other plants, and possessing antimalarial, antifeedant, insecticidal, anti-inflammatory and anticancer activities. Catalyzes the epoxidation of melianol to produce 7,8-epoxymelianol. This chain is 7,8-epoxymelianol synthase CYP88A154, found in Ailanthus altissima (Tree-of-heaven).